We begin with the raw amino-acid sequence, 419 residues long: L-rhamnose isomerase (419 aa).

Mn(2+) is bound by residues histidine 262, aspartate 294, and aspartate 296.

This sequence belongs to the rhamnose isomerase family. Homotetramer. It depends on Mn(2+) as a cofactor.

Its subcellular location is the cytoplasm. The catalysed reaction is L-rhamnopyranose = L-rhamnulose. It functions in the pathway carbohydrate degradation; L-rhamnose degradation; glycerone phosphate from L-rhamnose: step 1/3. Catalyzes the interconversion of L-rhamnose and L-rhamnulose. The protein is L-rhamnose isomerase of Escherichia coli O45:K1 (strain S88 / ExPEC).